Consider the following 484-residue polypeptide: Ribosomal RNA small subunit methyltransferase F (484 aa).

S-adenosyl-L-methionine is bound by residues 126-132 (AAAPGSK), glutamate 150, aspartate 177, and aspartate 195. The Nucleophile role is filled by cysteine 248.

Belongs to the class I-like SAM-binding methyltransferase superfamily. RsmB/NOP family.

The protein localises to the cytoplasm. It carries out the reaction cytidine(1407) in 16S rRNA + S-adenosyl-L-methionine = 5-methylcytidine(1407) in 16S rRNA + S-adenosyl-L-homocysteine + H(+). In terms of biological role, specifically methylates the cytosine at position 1407 (m5C1407) of 16S rRNA. In Pectobacterium carotovorum subsp. carotovorum (strain PC1), this protein is Ribosomal RNA small subunit methyltransferase F.